The chain runs to 130 residues: Small ribosomal subunit protein uS11 (130 aa).

Belongs to the universal ribosomal protein uS11 family. As to quaternary structure, part of the 30S ribosomal subunit. Interacts with proteins S7 and S18. Binds to IF-3.

Functionally, located on the platform of the 30S subunit, it bridges several disparate RNA helices of the 16S rRNA. Forms part of the Shine-Dalgarno cleft in the 70S ribosome. This is Small ribosomal subunit protein uS11 from Prochlorococcus marinus (strain AS9601).